We begin with the raw amino-acid sequence, 263 residues long: Small ribosomal subunit protein uS2 (263 aa).

The residue at position 2 (serine 2) is an N-acetylserine. Residues 213-223 are compositionally biased toward low complexity; that stretch reads NAAEEARAGAT. Positions 213 to 245 are disordered; sequence NAAEEARAGATEETEEVVAEAETEWNTETNVED. Over residues 224–245 the composition is skewed to acidic residues; the sequence is EETEEVVAEAETEWNTETNVED.

Belongs to the universal ribosomal protein uS2 family. Component of the small ribosomal subunit. Mature ribosomes consist of a small (40S) and a large (60S) subunit. The 40S subunit contains about 33 different proteins and 1 molecule of RNA (18S). The 60S subunit contains about 49 different proteins and 3 molecules of RNA (25S, 5.8S and 5S). Interacts with RPS21.

The protein localises to the cytoplasm. Its function is as follows. Required for the assembly and/or stability of the 40S ribosomal subunit. Required for the processing of the 20S rRNA-precursor to mature 18S rRNA in a late step of the maturation of 40S ribosomal subunits. In Clavispora lusitaniae (strain ATCC 42720) (Yeast), this protein is Small ribosomal subunit protein uS2.